The chain runs to 215 residues: Kunitz trypsin inhibitor 2 (215 aa).

An N-terminal signal peptide occupies residues 1 to 23; it reads MKNPSVISFLIILLFAATICTHG. A disulfide bridge connects residues cysteine 67 and cysteine 114. N-linked (GlcNAc...) asparagine glycosylation occurs at asparagine 145.

This sequence belongs to the protease inhibitor I3 (leguminous Kunitz-type inhibitor) family. Interacts with RD21A. Interacts with RD21B and RD21C. In terms of tissue distribution, expressed in vascular bundles of the carpels, the transmitting tract of the style and septum epidermis. Expressed in etiolated seedlings.

The protein localises to the secreted. Its subcellular location is the cell wall. The protein resides in the extracellular space. It localises to the apoplast. It is found in the endoplasmic reticulum. Functionally, water-soluble and chlorophyll-binding protein that probably does not function as a chloroplast chlorophyll carrier and is not involved in photosynthesis. Involved in the control of cell death in the transmitting tract and septum epidermis during flower development. Binds and inhibits the activity of the cysteine protease RD21A as a pro-death protein. May play a role in herbivore resistance activation during seedling greening. The sequence is that of Kunitz trypsin inhibitor 2 from Arabidopsis thaliana (Mouse-ear cress).